The primary structure comprises 1321 residues: MYFLSGWPRRLLCPLRSDERPFRIEPSAQRFYLAVLSETQISIWFSRPSVLIVSYIESGKAAAQFGFYQQVEWKPDDSMIAVAAANGYVLLFDIIGGLDDKYLYEPVYPKGSARVKVTPGYKEEQCAPALTLEMKKPVDLEAPISCLQSLAEDLLVATADGFLHMLHWDSVSNGRRAVNLCTIPFSLDLQSSRGGPCLDLDGVYIRDLEYCATLDGFAVVFDDGRIGFITPTANRLATDQLQGVWAADVTDGTCVAVNNKYRLMAFGCTSGSVLVYMIDSSTGCMQLSHKLELTPKHYPDIWNKTGPVKMIRWSPDCSVAMVTWECGGLSLWSVFGAHLICTLGEDFAYRSDGTKKDPLKISSMSWGVEGYHLWVIRSSDSTVTEEKQEKLQQNTILQFQFIKSSNQEQVLLQGEDRLYVTCGDPTQTQTPGQCRSSSTAPLSQGLSTLLGHKHWQVVQIHSTYLETNWPIRVRNAHDRRRVTLIMLMLTDHYAVCEQNMTVTGGLAWWNDFVVVACYNFIDRQEELRLYVRSANLDNAFASITKLHADTLLLNVFRNMVILFRADCSICLYSIERRHDGPSPSASVELLQEVSMSRYIPHPGLVVSVTLTSVRTESGITLKAPQQACSAESILLNLAGQLIMLQRDRSGPQVREKDAPANHSKLLPFCPPVVLAQCVESVWTSSRSNRKKRHLMEALWLSCGEAGMKVWLPLFPRDHRKPHSFLSRRIMLPFHINIYPLTVLFEDALILGASNETVLFDGLSSSAEPLEALFPYCTVERTSQIYLHHILRQLLVRNLGEQALMLAQSCASLPYFPHVLELMVHVVLEEEATSREPIPDPLLPTVAKFVTEFPLFLQTIVHCARKTEYALWNYLFAAVGNPKDLFEECLMAQDLDTAASYLIILQNMEVPAVSRQHATLLFNTALEQGKWDLCRHMIRFLKAIGSGESETPPTTPTTQEQSPSSGFEFFRNRSISLSQSADSIAAGKFNLQKTMSMPTGPSSKSDSAENLYIDVMLWRHARRLLEQVRLRDLGCFSAQLGFELIGWLCRERTRVARVDDFVTALKCLHKDFLWPFPVIPACTISSPLKNGRCRPVLSSRLLKSQSADSLLNSEMDTTPPQVSTANHRWLDGLGAVSKELDSASSHGGPQTQEAFLSPLISKGEQVSDIYLYFHPSIHPIHLSIHPSIVLFIHSSFYPSIHPSFHPSIHPSIVLSIHPSIHRSIYLSIHPSIHPSIHPSIVLFIHPSIVPSIHPSIHPSIHPLFYLSIHPSIHPSIHRSIHPSIHRSIYPSIHRSIHPSIHRSIYPFIHPSIVLSIHPSIHC.

WD repeat units lie at residues 63 to 102 and 303 to 342; these read AQFG…DDKY and NKTG…LICT. The disordered stretch occupies residues 945-964; the sequence is SGESETPPTTPTTQEQSPSS.

Forms a complex with rgp1; the interaction enhances rab6a GTPase activity.

It localises to the cytoplasm. Its subcellular location is the cytosol. The protein resides in the membrane. In terms of biological role, the RIC1-RGP1 complex acts as a guanine nucleotide exchange factor (GEF), which activates RAB6A by exchanging bound GDP for free GTP, and may be thereby required for efficient fusion of endosome-derived vesicles with the Golgi compartment. The RIC1-RGP1 complex participates in the recycling of mannose-6-phosphate receptors. It is a regulator of procollagen transport and secretion, and is required for correct cartilage morphogenesis and development of the craniofacial skeleton. This is Guanine nucleotide exchange factor subunit RIC1 (ric1) from Danio rerio (Zebrafish).